Reading from the N-terminus, the 166-residue chain is Interferon gamma (166 aa).

Residues 1-23 (MKYTSYFLALLLCVLLGFSGSYG) form the signal peptide. Gln-24 is subject to Pyrrolidone carboxylic acid. 2 N-linked (GlcNAc...) asparagine glycosylation sites follow: Asn-39 and Asn-106.

Belongs to the type II (or gamma) interferon family. As to quaternary structure, homodimer. Interacts with IFNGR1 (via extracellular domain); this interaction promotes IFNGR1 dimerization. As to expression, released primarily from activated T lymphocytes.

The protein resides in the secreted. Its function is as follows. Type II interferon produced by immune cells such as T-cells and NK cells that plays crucial roles in antimicrobial, antiviral, and antitumor responses by activating effector immune cells and enhancing antigen presentation. Primarily signals through the JAK-STAT pathway after interaction with its receptor IFNGR1 to affect gene regulation. Upon IFNG binding, IFNGR1 intracellular domain opens out to allow association of downstream signaling components JAK2, JAK1 and STAT1, leading to STAT1 activation, nuclear translocation and transcription of IFNG-regulated genes. Many of the induced genes are transcription factors such as IRF1 that are able to further drive regulation of a next wave of transcription. Plays a role in class I antigen presentation pathway by inducing a replacement of catalytic proteasome subunits with immunoproteasome subunits. In turn, increases the quantity, quality, and repertoire of peptides for class I MHC loading. Increases the efficiency of peptide generation also by inducing the expression of activator PA28 that associates with the proteasome and alters its proteolytic cleavage preference. Up-regulates as well MHC II complexes on the cell surface by promoting expression of several key molecules such as cathepsins B/CTSB, H/CTSH, and L/CTSL. Participates in the regulation of hematopoietic stem cells during development and under homeostatic conditions by affecting their development, quiescence, and differentiation. In Bubalus bubalis (Domestic water buffalo), this protein is Interferon gamma (IFNG).